Here is a 150-residue protein sequence, read N- to C-terminus: Cell division protein SepF (150 aa).

Belongs to the SepF family. As to quaternary structure, homodimer. Interacts with FtsZ.

The protein resides in the cytoplasm. Cell division protein that is part of the divisome complex and is recruited early to the Z-ring. Probably stimulates Z-ring formation, perhaps through the cross-linking of FtsZ protofilaments. Its function overlaps with FtsA. In Clostridium botulinum (strain Kyoto / Type A2), this protein is Cell division protein SepF.